The sequence spans 86 residues: Small ribosomal subunit protein bS20 (86 aa).

The protein belongs to the bacterial ribosomal protein bS20 family.

Functionally, binds directly to 16S ribosomal RNA. This is Small ribosomal subunit protein bS20 from Arthrobacter sp. (strain FB24).